A 70-amino-acid polypeptide reads, in one-letter code: Exodeoxyribonuclease 7 small subunit (70 aa).

The protein belongs to the XseB family. As to quaternary structure, heterooligomer composed of large and small subunits.

The protein resides in the cytoplasm. It carries out the reaction Exonucleolytic cleavage in either 5'- to 3'- or 3'- to 5'-direction to yield nucleoside 5'-phosphates.. Functionally, bidirectionally degrades single-stranded DNA into large acid-insoluble oligonucleotides, which are then degraded further into small acid-soluble oligonucleotides. The polypeptide is Exodeoxyribonuclease 7 small subunit (Magnetococcus marinus (strain ATCC BAA-1437 / JCM 17883 / MC-1)).